Reading from the N-terminus, the 575-residue chain is Estrogen receptor beta (575 aa).

The tract at residues 1–160 (MSSSLSPTLQ…GAVVKRDMHF (160 aa)) is modulating. The disordered stretch occupies residues 108–151 (DTKPHTSGRHSSFLSRPKLFGKRPEDGDGDEALDDDDPSSSSSG). Residues 134–145 (GDGDEALDDDDP) are compositionally biased toward acidic residues. NR C4-type zinc fingers lie at residues 161-181 (CVVC…CEGC) and 197-221 (CPAT…LRKC). Positions 161 to 226 (CVVCHDYASG…RLRKCYEMGM (66 aa)) form a DNA-binding region, nuclear receptor. Residues 290-526 (SPEQLVYCIL…DLLLEMLDAN (237 aa)) enclose the NR LBD domain. Polar residues predominate over residues 537 to 549 (VCTDPVTPATSPN). The segment at 537–557 (VCTDPVTPATSPNTPLPPQLH) is disordered.

This sequence belongs to the nuclear hormone receptor family. NR3 subfamily. As to quaternary structure, binds DNA as a homodimer. Can form a heterodimer with ER-alpha. In terms of tissue distribution, ovary and testis.

It localises to the nucleus. Functionally, binds estrogens with an affinity similar to that of ER-alpha, and activates expression of reporter genes containing estrogen response elements (ERE) in an estrogen-dependent manner. The protein is Estrogen receptor beta (esr2) of Ictalurus punctatus (Channel catfish).